The chain runs to 483 residues: tRNA sulfurtransferase (483 aa).

The THUMP domain maps to 61 to 165 (AEVLEILTTT…DELLNQVIAR (105 aa)). ATP contacts are provided by residues 183–184 (LI), Lys265, Gly287, and Gln296. Residues Cys344 and Cys457 are joined by a disulfide bond. The region spanning 405–483 (EEGNAVVLDI…GFNNVKVYRP (79 aa)) is the Rhodanese domain. Residue Cys457 is the Cysteine persulfide intermediate of the active site.

The protein belongs to the ThiI family.

It localises to the cytoplasm. It catalyses the reaction [ThiI sulfur-carrier protein]-S-sulfanyl-L-cysteine + a uridine in tRNA + 2 reduced [2Fe-2S]-[ferredoxin] + ATP + H(+) = [ThiI sulfur-carrier protein]-L-cysteine + a 4-thiouridine in tRNA + 2 oxidized [2Fe-2S]-[ferredoxin] + AMP + diphosphate. The enzyme catalyses [ThiS sulfur-carrier protein]-C-terminal Gly-Gly-AMP + S-sulfanyl-L-cysteinyl-[cysteine desulfurase] + AH2 = [ThiS sulfur-carrier protein]-C-terminal-Gly-aminoethanethioate + L-cysteinyl-[cysteine desulfurase] + A + AMP + 2 H(+). It functions in the pathway cofactor biosynthesis; thiamine diphosphate biosynthesis. Catalyzes the ATP-dependent transfer of a sulfur to tRNA to produce 4-thiouridine in position 8 of tRNAs, which functions as a near-UV photosensor. Also catalyzes the transfer of sulfur to the sulfur carrier protein ThiS, forming ThiS-thiocarboxylate. This is a step in the synthesis of thiazole, in the thiamine biosynthesis pathway. The sulfur is donated as persulfide by IscS. The chain is tRNA sulfurtransferase from Vibrio cholerae serotype O1 (strain ATCC 39315 / El Tor Inaba N16961).